A 304-amino-acid chain; its full sequence is MGSVGRLHCLTMTAAENPTPGDLALVPLVTCKLCLCEQSLDKMTTLQECRCIFCTACLKQYMQLAIREGCGSPITCPDMVCLNHGTLQEAEIACLVPVDQFQLYQRLKFEREVHLDPCRTWCPVADCQTVCPVATSDPGQPVLVECPSCHLKFCSCCKDAWHAEVSCRDSQPGILPTEHGTLFGTETDAPIKQCPVCRVYIERNEGCAQMMCKNCKHTFCWYCLQNLDNDIFLRHYDRGPCRNKLGHSRASVMWNRTQVVGILVGLGIIALVTSPLLLLASPCIICCVCKSCRGKKKKHDPSTT.

The TRIAD supradomain stretch occupies residues 27 to 245 (PLVTCKLCLC…YDRGPCRNKL (219 aa)). Cysteine 31, cysteine 34, cysteine 54, cysteine 57, cysteine 122, cysteine 127, cysteine 146, cysteine 149, cysteine 154, cysteine 157, histidine 162, cysteine 167, cysteine 194, and cysteine 197 together coordinate Zn(2+). The segment at 31–81 (CKLCLCEQSLDKMTTLQECRCIFCTACLKQYMQLAIREGCGSPITCPDMVC) adopts an RING-type 1 zinc-finger fold. Residues 102–167 (QLYQRLKFER…KDAWHAEVSC (66 aa)) form an IBR-type zinc finger. Residues 194 to 223 (CPVCRVYIERNEGCAQMMCKNCKHTFCWYC) form an RING-type 2; atypical zinc finger. Cysteine 207 is a catalytic residue. Cysteine 212, cysteine 215, cysteine 220, cysteine 223, histidine 235, and cysteine 241 together coordinate Zn(2+). The helical transmembrane segment at 259–279 (VVGILVGLGIIALVTSPLLLL) threads the bilayer.

The protein belongs to the RBR family. RNF144 subfamily. Interacts with UBE2L3, UBE2L6 and LCMT2, as well as with BAX. Interacts with TBK1; this interaction inhibits TBK1 phosphorylation and 'Lys-63'-linked polyubiquitination. Auto-ubiquitinated.

The protein resides in the mitochondrion membrane. It localises to the cytoplasm. The catalysed reaction is [E2 ubiquitin-conjugating enzyme]-S-ubiquitinyl-L-cysteine + [acceptor protein]-L-lysine = [E2 ubiquitin-conjugating enzyme]-L-cysteine + [acceptor protein]-N(6)-ubiquitinyl-L-lysine.. It participates in protein modification; protein ubiquitination. E3 ubiquitin-protein ligase which accepts ubiquitin from E2 ubiquitin-conjugating enzymes UBE2L3 and UBE2L6 in the form of a thioester and then directly transfers the ubiquitin to targeted substrates such as LCMT2, thereby promoting their degradation. Induces apoptosis via a p53/TP53-dependent but caspase-independent mechanism. Plays a crucial role in maintaining the genomic stability by controlling the degradation of multiple proteins involved in mitotic progression and DNA damage. Regulates epithelial homeostasis by mediating degradation of CDKN1A and isoform 2 of TP63. Plays a regulatory role in innate immunity by negatively regulating IRF3 activation and IFN-beta production. Mechanistically, inhibits TBK1 phosphorylation and 'Lys-63'-linked polyubiquitination independently of its E3 ligase activity. Alternatively, promotes 'Lys-27' and 'Lys-33'-linked ubiquitination of IFIH1/MDA5, promoting selective autophagic degradation of IFIH1/MDA5 to inhibit antiviral response. The polypeptide is E3 ubiquitin-protein ligase RNF144B (RNF144B) (Bos taurus (Bovine)).